The chain runs to 309 residues: Homoserine O-succinyltransferase (309 aa).

Cysteine 142 acts as the Acyl-thioester intermediate in catalysis. The substrate site is built by lysine 163 and serine 192. Histidine 235 functions as the Proton acceptor in the catalytic mechanism. Residue glutamate 237 is part of the active site. Arginine 249 is a binding site for substrate.

Belongs to the MetA family. In terms of assembly, homodimer.

The protein resides in the cytoplasm. It catalyses the reaction L-homoserine + succinyl-CoA = O-succinyl-L-homoserine + CoA. Its pathway is amino-acid biosynthesis; L-methionine biosynthesis via de novo pathway; O-succinyl-L-homoserine from L-homoserine: step 1/1. Its function is as follows. Transfers a succinyl group from succinyl-CoA to L-homoserine, forming succinyl-L-homoserine. The sequence is that of Homoserine O-succinyltransferase from Shigella sonnei (strain Ss046).